Consider the following 56-residue polypeptide: Large ribosomal subunit protein bL32 (56 aa).

The protein belongs to the bacterial ribosomal protein bL32 family.

The polypeptide is Large ribosomal subunit protein bL32 (Bacillus cereus (strain ATCC 14579 / DSM 31 / CCUG 7414 / JCM 2152 / NBRC 15305 / NCIMB 9373 / NCTC 2599 / NRRL B-3711)).